The primary structure comprises 458 residues: ATP synthase subunit beta (458 aa).

148–155 (GGAGVGKT) provides a ligand contact to ATP.

The protein belongs to the ATPase alpha/beta chains family. As to quaternary structure, F-type ATPases have 2 components, CF(1) - the catalytic core - and CF(0) - the membrane proton channel. CF(1) has five subunits: alpha(3), beta(3), gamma(1), delta(1), epsilon(1). CF(0) has three main subunits: a(1), b(2) and c(9-12). The alpha and beta chains form an alternating ring which encloses part of the gamma chain. CF(1) is attached to CF(0) by a central stalk formed by the gamma and epsilon chains, while a peripheral stalk is formed by the delta and b chains.

It localises to the cell inner membrane. The catalysed reaction is ATP + H2O + 4 H(+)(in) = ADP + phosphate + 5 H(+)(out). Produces ATP from ADP in the presence of a proton gradient across the membrane. The catalytic sites are hosted primarily by the beta subunits. The sequence is that of ATP synthase subunit beta from Shewanella piezotolerans (strain WP3 / JCM 13877).